We begin with the raw amino-acid sequence, 280 residues long: 4-diphosphocytidyl-2-C-methyl-D-erythritol kinase (280 aa).

K8 is a catalytic residue. 91–101 serves as a coordination point for ATP; that stretch reads PVAAGLAGGST. The active site involves D133.

This sequence belongs to the GHMP kinase family. IspE subfamily.

It catalyses the reaction 4-CDP-2-C-methyl-D-erythritol + ATP = 4-CDP-2-C-methyl-D-erythritol 2-phosphate + ADP + H(+). The protein operates within isoprenoid biosynthesis; isopentenyl diphosphate biosynthesis via DXP pathway; isopentenyl diphosphate from 1-deoxy-D-xylulose 5-phosphate: step 3/6. Functionally, catalyzes the phosphorylation of the position 2 hydroxy group of 4-diphosphocytidyl-2C-methyl-D-erythritol. This is 4-diphosphocytidyl-2-C-methyl-D-erythritol kinase from Clostridium botulinum (strain 657 / Type Ba4).